The chain runs to 868 residues: Ionotropic receptor 93a (868 aa).

The first 28 residues, 1 to 28, serve as a signal peptide directing secretion; that stretch reads MNPGEMRPSACLLLLAGLQLSILVPTEA. The Extracellular segment spans residues 29 to 565; that stretch reads NDFSSFLSAN…ITRKPDEVSR (537 aa). Residues N38, N205, N294, N305, N432, N475, N499, and N543 are each glycosylated (N-linked (GlcNAc...) asparagine). The helical transmembrane segment at 566 to 586 threads the bilayer; sequence IYLFTAPFTVETWFCLMGIIL. The Cytoplasmic portion of the chain corresponds to 587-642; it reads LTAPTLYAINRLAPLKEMRIVGLSTVKSCFWYIFGALLQQGGMYLPTADSGRLVVG. A helical transmembrane segment spans residues 643 to 663; sequence FWWIVVIVLVTTYCGNLVAFL. Residues 664-832 are Extracellular-facing; that stretch reads TFPKFQPGVD…HKVNMDDMQG (169 aa). N-linked (GlcNAc...) asparagine glycosylation occurs at N691. A helical membrane pass occupies residues 833-853; it reads CFLVLLLGFTLALLIVCGEFW. Residues 854–868 are Cytoplasmic-facing; the sequence is YRRFRASRKRRQFTN.

Belongs to the glutamate-gated ion channel (TC 1.A.10.1) family. In the antenna, detected in sacculus neurons which innervate the first and second chambers (at protein level). Expressed in multiple cells of the larval dorsal organ ganglion, including the dorsal organ cool cells where it is predominately localized to the dendritic bulbs (at protein level).

The protein localises to the cell membrane. Functionally, integral part of various neural sensory systems in the antenna that provide the neural basis for the response to environmental changes in temperature (thermosensation) and humidity (hygrosensation). Together with Ir21a and Ir25a, mediates the response of the larval dorsal organ cool cells, a trio of cool-responsive neurons, to cooling and is required for cool avoidance behavior. Together with Ir25a and Ir40a, mediates the response of the hydrosensory sacculus neurons to changes in relative humidity, and is required for dry detection and humidiy preference behavior. The protein is Ionotropic receptor 93a of Drosophila melanogaster (Fruit fly).